A 239-amino-acid polypeptide reads, in one-letter code: Purine nucleoside phosphorylase DeoD-type (239 aa).

H5 provides a ligand contact to a purine D-ribonucleoside. Residues G21, R25, R44, and 88-91 (RIGS) contribute to the phosphate site. A purine D-ribonucleoside contacts are provided by residues 180-182 (EME) and 204-205 (TD). D205 acts as the Proton donor in catalysis.

It belongs to the PNP/UDP phosphorylase family. As to quaternary structure, homohexamer; trimer of homodimers.

It catalyses the reaction a purine D-ribonucleoside + phosphate = a purine nucleobase + alpha-D-ribose 1-phosphate. The enzyme catalyses a purine 2'-deoxy-D-ribonucleoside + phosphate = a purine nucleobase + 2-deoxy-alpha-D-ribose 1-phosphate. In terms of biological role, catalyzes the reversible phosphorolytic breakdown of the N-glycosidic bond in the beta-(deoxy)ribonucleoside molecules, with the formation of the corresponding free purine bases and pentose-1-phosphate. In Aliivibrio fischeri (strain ATCC 700601 / ES114) (Vibrio fischeri), this protein is Purine nucleoside phosphorylase DeoD-type.